Reading from the N-terminus, the 357-residue chain is Geranylgeranyl pyrophosphate synthase, chloroplastic (357 aa).

Residues 1–40 (MRSNLCHPLKNQLPISFFLSGTIRKPIFSCSRLSISAIIT) constitute a chloroplast transit peptide. Isopentenyl diphosphate-binding residues include Lys106, Arg109, and His138. Residues Asp145 and Asp151 each coordinate Mg(2+). Residue Arg156 participates in dimethylallyl diphosphate binding. Isopentenyl diphosphate is bound at residue Arg157. Lys242, Thr243, Gln280, Lys297, and Lys307 together coordinate dimethylallyl diphosphate.

The protein belongs to the FPP/GGPP synthase family. Mg(2+) is required as a cofactor.

The protein resides in the plastid. Its subcellular location is the chloroplast. It catalyses the reaction isopentenyl diphosphate + dimethylallyl diphosphate = (2E)-geranyl diphosphate + diphosphate. The enzyme catalyses isopentenyl diphosphate + (2E)-geranyl diphosphate = (2E,6E)-farnesyl diphosphate + diphosphate. It carries out the reaction isopentenyl diphosphate + (2E,6E)-farnesyl diphosphate = (2E,6E,10E)-geranylgeranyl diphosphate + diphosphate. The protein operates within isoprenoid biosynthesis; farnesyl diphosphate biosynthesis; farnesyl diphosphate from geranyl diphosphate and isopentenyl diphosphate: step 1/1. It functions in the pathway isoprenoid biosynthesis; geranyl diphosphate biosynthesis; geranyl diphosphate from dimethylallyl diphosphate and isopentenyl diphosphate: step 1/1. Its pathway is isoprenoid biosynthesis; geranylgeranyl diphosphate biosynthesis; geranylgeranyl diphosphate from farnesyl diphosphate and isopentenyl diphosphate: step 1/1. In terms of biological role, catalyzes the trans-addition of the three molecules of IPP onto DMAPP to form geranylgeranyl pyrophosphate. In Catharanthus roseus (Madagascar periwinkle), this protein is Geranylgeranyl pyrophosphate synthase, chloroplastic (GGPS1).